We begin with the raw amino-acid sequence, 386 residues long: 2-deoxy-scyllo-inosose synthase (386 aa).

Residues D42, 73–76 (EEHK), 105–109 (GVTGN), 129–130 (TT), 140–142 (SLK), and 151–152 (KN) contribute to the NAD(+) site. K142 is a catalytic residue. E184 lines the Co(2+) pocket. Residue E244 is part of the active site. The Co(2+) site is built by H247 and H263.

Belongs to the sugar phosphate cyclases superfamily. DOI synthase family. It depends on NAD(+) as a cofactor. Co(2+) is required as a cofactor.

It carries out the reaction D-glucose 6-phosphate = 2-deoxy-L-scyllo-inosose + phosphate. It functions in the pathway metabolic intermediate biosynthesis; 2-deoxystreptamine biosynthesis; 2-deoxystreptamine from D-glucose 6-phosphate: step 1/4. Its pathway is antibiotic biosynthesis; tobramycin biosynthesis. Catalyzes the intramolecular carbocycle formation from D-glucose-6-phosphate to 2-deoxy-scyllo-inosose (DOI). In Streptoalloteichus tenebrarius (strain ATCC 17920 / DSM 40477 / JCM 4838 / CBS 697.72 / NBRC 16177 / NCIMB 11028 / NRRL B-12390 / A12253. 1 / ISP 5477) (Streptomyces tenebrarius), this protein is 2-deoxy-scyllo-inosose synthase (tbmA).